A 108-amino-acid polypeptide reads, in one-letter code: Ig kappa chain V region K-25 (108 aa).

The framework-1 stretch occupies residues 1–23 (AVELTQTPASVEAAVGGTVTIKC). The tract at residues 24–34 (QASQBIYSYLS) is complementarity-determining-1. The framework-2 stretch occupies residues 35-49 (WYQQKPGQPPKLLIY). The interval 50 to 56 (KASTLAS) is complementarity-determining-2. The interval 57–88 (GVSSRFKGSGSGTEFTLTISDLZCADAATYYC) is framework-3. The segment at 89-97 (QTYSYSSTY) is complementarity-determining-3. The framework-4 stretch occupies residues 98–107 (FGGGTEVVVK).

This chain is Ig kappa chain V region K-25, found in Oryctolagus cuniculus (Rabbit).